Consider the following 518-residue polypeptide: Probable triacylglyceride transporter BCG_1471c (518 aa).

The next 14 helical transmembrane spans lie at 7 to 27 (VAIS…YVVV), 46 to 66 (RITW…PLLG), 76 to 96 (LMLQ…ALAG), 110 to 130 (IQGV…ADLW), 144 to 164 (AAQE…VWLL), 170 to 190 (VFWI…FSLP), 201 to 221 (VDLV…IGLY), 230 to 250 (VLPD…VAFF), 270 to 290 (PFLS…VTLV), 308 to 328 (AGML…GGWI), 337 to 357 (VAFA…HWPV), 379 to 401 (LVVA…LRVV), 408 to 428 (IASA…VAAL), and 475 to 495 (IFTI…LISG).

Belongs to the major facilitator superfamily.

It is found in the cell inner membrane. Its activity is regulated as follows. Inhibited by CCCP and valinomycin. Functionally, in association with lipoprotein LprG probably transports triacylglycerides (TAG) across the inner cell membrane into the periplasm; TAG probably regulates lipid metabolism and growth regulation. Confers resistance to several drugs such as rifampicin, clofazimine and novobiocin; is also part of the oxidative stress response and is needed to maintain normal growth characteristics. Probably an efflux transporter, involved in maintaining correct cell wall permeability. Probably required with LprG for normal surface localization of lipoarabinomannan (LAM). Required for optimal growth on cholesterol. The protein is Probable triacylglyceride transporter BCG_1471c of Mycobacterium bovis (strain BCG / Pasteur 1173P2).